Reading from the N-terminus, the 476-residue chain is Probable rhodanese domain-containing dual specificity protein phosphatase (476 aa).

Positions 32–190 (IGSSKIIIDL…FQKDYSFMCN (159 aa)) constitute a Rhodanese domain. In terms of domain architecture, Tyrosine-protein phosphatase spans 208–350 (YPSEIIKDFL…LKDYQQHLTL (143 aa)). Cys294 (phosphocysteine intermediate) is an active-site residue. The segment covering 425 to 436 (KTTTSSTTINNK) has biased composition (low complexity). A disordered region spans residues 425–476 (KTTTSSTTINNKGQQQDKAQEEKDSIFSYADKQEKMTHPTLHSPIELPQSSL). Residues 442-461 (KAQEEKDSIFSYADKQEKMT) show a composition bias toward basic and acidic residues.

This sequence belongs to the protein-tyrosine phosphatase family. Non-receptor class dual specificity subfamily.

The catalysed reaction is O-phospho-L-tyrosyl-[protein] + H2O = L-tyrosyl-[protein] + phosphate. It catalyses the reaction O-phospho-L-seryl-[protein] + H2O = L-seryl-[protein] + phosphate. It carries out the reaction O-phospho-L-threonyl-[protein] + H2O = L-threonyl-[protein] + phosphate. In terms of biological role, has a dual specificity toward Ser/Thr and Tyr-containing proteins. This chain is Probable rhodanese domain-containing dual specificity protein phosphatase, found in Dictyostelium discoideum (Social amoeba).